A 660-amino-acid polypeptide reads, in one-letter code: Long chain acyl-CoA synthetase 1 (660 aa).

225–236 (IMYTSGTSGDPK) is an ATP binding site. Positions 492 to 516 (DGWFHTGDIGEILPNGVLKIIDRKK) are fatty acid-binding.

It belongs to the ATP-dependent AMP-binding enzyme family. Requires Mg(2+) as cofactor. In terms of tissue distribution, epidermal-specific expression along the entire stem. In cauline leaves, was expressed over the entire leaf surface, most strongly in trichomes and guard cells, but not in mesophyll cells. In flowers, the expression was detected in the stigma and filaments of the stamens, and in the carpel was expressed specifically in ovaries. In roots, was expressed in primary and lateral roots, but not in the root tips.

It localises to the endoplasmic reticulum. It catalyses the reaction a long-chain fatty acid + ATP + CoA = a long-chain fatty acyl-CoA + AMP + diphosphate. Its pathway is lipid metabolism; fatty acid metabolism. Activation of long-chain fatty acids for both synthesis of cellular lipids, and degradation via beta-oxidation. Acts in both the wax and cutin pathways. Preferentially uses palmitate, palmitoleate, linoleate and eicosenoate. Seems to have a specific activity against very long-chain fatty acid (VLCFA) class with acids longer than 24 carbons (C(24)). In Arabidopsis thaliana (Mouse-ear cress), this protein is Long chain acyl-CoA synthetase 1 (LACS1).